The following is a 370-amino-acid chain: tRNA-specific 2-thiouridylase MnmA (370 aa).

ATP contacts are provided by residues 19 to 26 (AMSGGVDS) and Leu-45. Catalysis depends on Cys-113, which acts as the Nucleophile. An intrachain disulfide couples Cys-113 to Cys-209. Gly-137 contacts ATP. Positions 159 to 161 (KDQ) are interaction with tRNA. The active-site Cysteine persulfide intermediate is the Cys-209.

The protein belongs to the MnmA/TRMU family.

The protein resides in the cytoplasm. The enzyme catalyses S-sulfanyl-L-cysteinyl-[protein] + uridine(34) in tRNA + AH2 + ATP = 2-thiouridine(34) in tRNA + L-cysteinyl-[protein] + A + AMP + diphosphate + H(+). In terms of biological role, catalyzes the 2-thiolation of uridine at the wobble position (U34) of tRNA, leading to the formation of s(2)U34. This chain is tRNA-specific 2-thiouridylase MnmA, found in Rickettsia conorii (strain ATCC VR-613 / Malish 7).